The chain runs to 25 residues: Androctonin (25 aa).

Disulfide bonds link cysteine 4–cysteine 20 and cysteine 10–cysteine 16.

It is found in the secreted. Its function is as follows. Active against both bacteria (Gram-positive and Gram-negative) and filamentous fungi. Acts on the membrane of the bacterial cells. It destabilize a membrane by modifying its properties. This chain is Androctonin, found in Androctonus australis (Sahara scorpion).